A 96-amino-acid chain; its full sequence is Phosphoribosyl-ATP pyrophosphatase (96 aa).

This sequence belongs to the PRA-PH family.

Its subcellular location is the cytoplasm. The catalysed reaction is 1-(5-phospho-beta-D-ribosyl)-ATP + H2O = 1-(5-phospho-beta-D-ribosyl)-5'-AMP + diphosphate + H(+). It functions in the pathway amino-acid biosynthesis; L-histidine biosynthesis; L-histidine from 5-phospho-alpha-D-ribose 1-diphosphate: step 2/9. In Methanococcus maripaludis (strain C6 / ATCC BAA-1332), this protein is Phosphoribosyl-ATP pyrophosphatase.